Here is a 299-residue protein sequence, read N- to C-terminus: GTPase Era (299 aa).

An Era-type G domain is found at 2 to 170 (KTGFVALAGK…LDLIIENLPE (169 aa)). The segment at 10 to 17 (GKPNVGKS) is G1. 10 to 17 (GKPNVGKS) provides a ligand contact to GTP. Residues 36-40 (QTTRN) are G2. Residues 57-60 (DTPG) are G3. Residues 57–61 (DTPGI) and 119–122 (NKID) contribute to the GTP site. The segment at 119–122 (NKID) is G4. Residues 149–151 (TSA) form a G5 region. The 78-residue stretch at 201 to 278 (TYEEIPHSVA…FLDLHVKVKR (78 aa)) folds into the KH type-2 domain.

Belongs to the TRAFAC class TrmE-Era-EngA-EngB-Septin-like GTPase superfamily. Era GTPase family. Monomer.

The protein localises to the cytoplasm. The protein resides in the cell inner membrane. An essential GTPase that binds both GDP and GTP, with rapid nucleotide exchange. Plays a role in 16S rRNA processing and 30S ribosomal subunit biogenesis and possibly also in cell cycle regulation and energy metabolism. In Thermosipho melanesiensis (strain DSM 12029 / CIP 104789 / BI429), this protein is GTPase Era.